A 491-amino-acid chain; its full sequence is Acetyl-coenzyme A carboxylase carboxyl transferase subunit beta, chloroplastic (491 aa).

A disordered region spans residues 26 to 49; sequence ARPRPIGNTNGSQDPSINDRDKNG. A compositionally biased stretch (polar residues) spans 32–41; sequence GNTNGSQDPS. Residues 222–491 form the CoA carboxyltransferase N-terminal domain; that stretch reads LWVQCDNCYG…PLNHNSQVKR (270 aa). Zn(2+) contacts are provided by Cys226, Cys229, Cys245, and Cys248. The C4-type zinc-finger motif lies at 226–248; the sequence is CDNCYGLNYKKIFSSKMNICEQC.

Belongs to the AccD/PCCB family. Acetyl-CoA carboxylase is a heterohexamer composed of biotin carboxyl carrier protein, biotin carboxylase and 2 subunits each of ACCase subunit alpha and ACCase plastid-coded subunit beta (accD). The cofactor is Zn(2+).

The protein resides in the plastid. The protein localises to the chloroplast stroma. It catalyses the reaction N(6)-carboxybiotinyl-L-lysyl-[protein] + acetyl-CoA = N(6)-biotinyl-L-lysyl-[protein] + malonyl-CoA. It functions in the pathway lipid metabolism; malonyl-CoA biosynthesis; malonyl-CoA from acetyl-CoA: step 1/1. In terms of biological role, component of the acetyl coenzyme A carboxylase (ACC) complex. Biotin carboxylase (BC) catalyzes the carboxylation of biotin on its carrier protein (BCCP) and then the CO(2) group is transferred by the transcarboxylase to acetyl-CoA to form malonyl-CoA. This Ceratophyllum demersum (Rigid hornwort) protein is Acetyl-coenzyme A carboxylase carboxyl transferase subunit beta, chloroplastic.